We begin with the raw amino-acid sequence, 325 residues long: Secreted frizzled-related protein 3 (325 aa).

Residues 1–32 (MVCGSPGGMLLLRAGLLALAALCLLRVPGARA) form the signal peptide. The FZ domain maps to 33 to 150 (AACEPVRIPL…VYDRGVCISP (118 aa)). 5 disulfides stabilise this stretch: C35–C96, C43–C89, C80–C119, C108–C147, and C112–C136. N49 carries N-linked (GlcNAc...) asparagine glycosylation. Residues 178 to 298 (CKCKPIRATQ…WDMKLRHLGL (121 aa)) enclose the NTR domain. The disordered stretch occupies residues 297–325 (GLSKSDSSNSDSTQSQKSGRNSNPRQARN). A compositionally biased stretch (low complexity) spans 299-314 (SKSDSSNSDSTQSQKS). Positions 315–325 (GRNSNPRQARN) are enriched in polar residues.

This sequence belongs to the secreted frizzled-related protein (sFRP) family. Interacts with MYOC. Expressed primarily in the cartilaginous cores of the long bone during embryonic and fetal development and in the appendicular skeleton (6-13 weeks). At 13 weeks of gestation, transcripts were present in early chondroblasts of the tarsal bones of the foot, the carpal bones of the hands and the epiphysis of long bones. Highly expressed in placenta and heart, followed by brain, skeletal muscle, kidney and pancreas. Weakly expressed in lung and liver.

It localises to the secreted. Functionally, soluble frizzled-related proteins (sFRPS) function as modulators of Wnt signaling through direct interaction with Wnts. They have a role in regulating cell growth and differentiation in specific cell types. SFRP3/FRZB appears to be involved in limb skeletogenesis. Antagonist of Wnt8 signaling. Regulates chondrocyte maturation and long bone development. The sequence is that of Secreted frizzled-related protein 3 (FRZB) from Homo sapiens (Human).